The sequence spans 253 residues: Polyhedrin (253 aa).

In terms of biological role, major component of the virus occlusion bodies, which are large proteinaceous structures (polyhedra), that protect the virus from the outside environment for extended periods until they are ingested by insect larvae. In Orgyia pseudotsugata cypovirus (OpCPV), this protein is Polyhedrin.